The chain runs to 258 residues: tRNA pseudouridine synthase A (258 aa).

Catalysis depends on D52, which acts as the Nucleophile. Y110 is a substrate binding site.

This sequence belongs to the tRNA pseudouridine synthase TruA family. Homodimer.

It carries out the reaction uridine(38/39/40) in tRNA = pseudouridine(38/39/40) in tRNA. In terms of biological role, formation of pseudouridine at positions 38, 39 and 40 in the anticodon stem and loop of transfer RNAs. This is tRNA pseudouridine synthase A from Francisella philomiragia subsp. philomiragia (strain ATCC 25017 / CCUG 19701 / FSC 153 / O#319-036).